A 706-amino-acid chain; its full sequence is Protein MAM3 (706 aa).

Residues 1-16 are Vacuolar-facing; sequence MSFLPLRSRSRSGAPH. The chain crosses the membrane as a helical span at residues 17-37; the sequence is WVYIILYHIFTIPKIYSLPLL. At 38 to 65 the chain is on the cytoplasmic side; the sequence is SGSHVLNSRDVADSGHSVGDEASVTTYY. The 184-residue stretch at 57–240 folds into the CNNM transmembrane domain; the sequence is DEASVTTYYI…MGVERLTKDE (184 aa). The helical transmembrane segment at 66–86 threads the bilayer; that stretch reads IISIILVLLGGVFAGLTLGLM. Over 87-120 the chain is Vacuolar; sequence GQDEVYLKVISTSGSNSEKKLAKRVLDLISRGKH. A helical transmembrane segment spans residues 121–141; it reads WVLVTLLLSNVITNETLPIVL. Residues 142 to 145 lie on the Cytoplasmic side of the membrane; it reads DRCL. A helical transmembrane segment spans residues 146-166; sequence GGGWQAVVSSTILIVIFGEII. The Vacuolar segment spans residues 167 to 177; it reads PQSVCVKYGLQ. A helical membrane pass occupies residues 178–198; the sequence is VGAFFCPFVLVLMYLMYPVAY. Topologically, residues 199–706 are cytoplasmic; the sequence is PIATLLDYML…ANGSSSTIKR (508 aa). CBS domains follow at residues 259–320 and 321–386; these read MTPI…DCLP and ISHF…IVDE. 3 disordered regions span residues 421–495, 515–540, and 557–597; these read SHKE…ASNP, ITTHTPHSSKEPSPAPHSNDKSLSAE, and LHTQ…ENQN. Positions 433–445 are enriched in low complexity; the sequence is ESSPLLSPSNSNH. Ser439 and Ser447 each carry phosphoserine. The span at 472–495 shows a compositional bias: polar residues; the sequence is AVLSPTPQVTEHGTIIPSNLASNP. Ser527 carries the post-translational modification Phosphoserine. Low complexity predominate over residues 566–575; sequence TQVTTSTKTT. Positions 576-597 are enriched in polar residues; it reads RNSPDSISIPNSGANHGNENQN. Position 603 is a phosphoserine (Ser603). At Tyr604 the chain carries Phosphotyrosine. The residue at position 607 (Thr607) is a Phosphothreonine. Ser614 carries the post-translational modification Phosphoserine. The tract at residues 626–706 is disordered; the sequence is IGPAKDWDES…ANGSSSTIKR (81 aa). Over residues 630 to 639 the composition is skewed to basic and acidic residues; that stretch reads KDWDESKSEY. A compositionally biased stretch (low complexity) spans 658–680; it reads SSSNASLFSSIKNKFKNENANNN. Positions 681 to 706 are enriched in polar residues; it reads DRSNFTDSLSRTSNYDANGSSSTIKR.

It belongs to the ACDP family.

Its subcellular location is the vacuole membrane. Functionally, involved in metal homeostasis and more specially in manganese sensitivity. In Saccharomyces cerevisiae (strain ATCC 204508 / S288c) (Baker's yeast), this protein is Protein MAM3 (MAM3).